We begin with the raw amino-acid sequence, 590 residues long: Ankyrin repeat-containing protein ITN1 (590 aa).

The interval Glu25 to Thr44 is disordered. ANK repeat units follow at residues His73–Glu102, Leu128–Ile157, Ser163–Gln192, Ser197–Glu226, Asn231–Arg260, Lys265–Met294, and Ser299–Thr329. 4 consecutive transmembrane segments (helical) span residues Val422 to Gly442, Ile460 to Ile480, Leu500 to Val520, and Val531 to Val551.

Interacts with REM19/RTV1. As to expression, expressed in roots, shoots, leaf vasculature and stems.

It localises to the cell membrane. Involved in salt stress tolerance. May act through abscisic acid (ABA) signaling pathways and promote reactive oxygen species (ROS) production. The sequence is that of Ankyrin repeat-containing protein ITN1 from Arabidopsis thaliana (Mouse-ear cress).